Here is a 147-residue protein sequence, read N- to C-terminus: D-aminoacyl-tRNA deacylase (147 aa).

The short motif at 137 to 138 is the Gly-cisPro motif, important for rejection of L-amino acids element; the sequence is GP.

It belongs to the DTD family. In terms of assembly, homodimer.

The protein localises to the cytoplasm. The catalysed reaction is glycyl-tRNA(Ala) + H2O = tRNA(Ala) + glycine + H(+). It catalyses the reaction a D-aminoacyl-tRNA + H2O = a tRNA + a D-alpha-amino acid + H(+). An aminoacyl-tRNA editing enzyme that deacylates mischarged D-aminoacyl-tRNAs. Also deacylates mischarged glycyl-tRNA(Ala), protecting cells against glycine mischarging by AlaRS. Acts via tRNA-based rather than protein-based catalysis; rejects L-amino acids rather than detecting D-amino acids in the active site. By recycling D-aminoacyl-tRNA to D-amino acids and free tRNA molecules, this enzyme counteracts the toxicity associated with the formation of D-aminoacyl-tRNA entities in vivo and helps enforce protein L-homochirality. The sequence is that of D-aminoacyl-tRNA deacylase from Bacillus pumilus (strain SAFR-032).